We begin with the raw amino-acid sequence, 209 residues long: NFKLVIVGDGGTGKTTFVKRHLTGEFEKKYEPTIGVEVHPLDFFTNCGKIRFYCWDTAGQEKFGGLRDGYYIHGQCAIIMFDVTARLTYKNVPTWHRDLCRVCENIPIVLCGNKVDVKNRQVKAKQVTFHRKKNLQYYEISAKSNYNFEKPFLYLARKLAGDPNLHFVESPALAPPEVQIDLAAQQQHEAELAAAASQPLPDDDDDAFD.

Residues 1–162 (NFKLVIVGDG…LYLARKLAGD (162 aa)) form the Small GTPase Ran-type domain. GTP is bound at residue 9-16 (DGGTGKTT). The interval 28–36 (KKYEPTIGV) is switch-I. GTP-binding positions include glycine 59, 113–116 (NKVD), and 141–143 (SAK). The tract at residues 59 to 75 (GQEKFGGLRDGYYIHGQ) is switch-II. Low complexity predominate over residues 187–200 (QHEAELAAAASQPL). Residues 187–209 (QHEAELAAAASQPLPDDDDDAFD) are disordered.

Belongs to the small GTPase superfamily. Ran family. As to quaternary structure, found in a nuclear export complex with RanGTP, exportin and pre-miRNA.

Its subcellular location is the nucleus. Its function is as follows. GTP-binding protein involved in nucleocytoplasmic transport. Required for the import of protein into the nucleus and also for RNA export. Involved in chromatin condensation and control of cell cycle. This Lotus japonicus (Lotus corniculatus var. japonicus) protein is GTP-binding nuclear protein Ran1B (RAN1B).